Consider the following 387-residue polypeptide: UDP-N-acetylglucosamine--N-acetylmuramyl-(pentapeptide) pyrophosphoryl-undecaprenol N-acetylglucosamine transferase (387 aa).

Residues 23–25 (TGG), Asn-135, Arg-174, Ser-203, Ile-261, 280–285 (ALTVSE), and Gln-306 contribute to the UDP-N-acetyl-alpha-D-glucosamine site.

This sequence belongs to the glycosyltransferase 28 family. MurG subfamily.

Its subcellular location is the cell inner membrane. The catalysed reaction is di-trans,octa-cis-undecaprenyl diphospho-N-acetyl-alpha-D-muramoyl-L-alanyl-D-glutamyl-meso-2,6-diaminopimeloyl-D-alanyl-D-alanine + UDP-N-acetyl-alpha-D-glucosamine = di-trans,octa-cis-undecaprenyl diphospho-[N-acetyl-alpha-D-glucosaminyl-(1-&gt;4)]-N-acetyl-alpha-D-muramoyl-L-alanyl-D-glutamyl-meso-2,6-diaminopimeloyl-D-alanyl-D-alanine + UDP + H(+). The protein operates within cell wall biogenesis; peptidoglycan biosynthesis. Its function is as follows. Cell wall formation. Catalyzes the transfer of a GlcNAc subunit on undecaprenyl-pyrophosphoryl-MurNAc-pentapeptide (lipid intermediate I) to form undecaprenyl-pyrophosphoryl-MurNAc-(pentapeptide)GlcNAc (lipid intermediate II). This chain is UDP-N-acetylglucosamine--N-acetylmuramyl-(pentapeptide) pyrophosphoryl-undecaprenol N-acetylglucosamine transferase, found in Colwellia psychrerythraea (strain 34H / ATCC BAA-681) (Vibrio psychroerythus).